Reading from the N-terminus, the 1328-residue chain is MAPPEIGNDEIPLQEFGQKSFAADNTIGGMQSISYDNSGAPMGLYKEKKGMYVTARNLSMSIGTEKKGDKRNILSDLNFFLKPGSMVLILGSPGCGKTSVMKALANQLHSETVSGSLLFNGKAANKSTHHRDVAYVVQGDHHMAPFTVRETFKFSADLQMSEGTSEEEKNARVDYILKTLDLTRQQDTVVGNEFLRGVSGGQKKRVTIGVEMVKDAGLFLMDEPSTGLDSTTTLELMKHFRELSNVNQVSSLVALLQPGVEVTKLFDFLMIMNAGHMVYFGPMSDAISYFEGLGFKLPKHHNPAEFFQEIVDEPELYFEGEGEPPLRGAEEFANAYKNSAMFQSIVNDLDNTQPDLTFCKDSSHLPKYPTPLSYQIRLASIRAFKMLISSQVAVRMRIIKSIVMGLILGSLFYGLDLNQTDGNNRSGLIFFSLLFIVFSGMGAIAILFEQREVFYIQKDGKYYKTFAFFLSLIFSEIPIALLETVVFCVLVYWMCGLQANAEKFIYFLLMNFVGDLAFQSFFKMVSAFAPNATLASVIAPAALAPFILFSGFMAPKRSIGGWWIWIYWISPIKYAFEGLMSNEHHGLIYSCDDSETIPPRNTPNFELPYPRGSGNSSICQITRGDQFLDQLGMPQNNWFKWIDLLIVFAFGALFSFGMYFFLKNVHVDHRASDPKNDKRSKKASKRSKKIKDSKVDIKENRMVKAQKEIPIGCYMQWKDLVYEVDVKKDGKNQRLRLLNEINGYVKPGMLLALMGPSGAGKSTLLDVLANRKTGGHTKGQILINGQERTKYFTRLSAYVEQFDVLPPTQTVKEAILFSAKTRLPSDMPNEEKIKFVENIIETLNLLKIQNKQIGHGEEGLSLSQRKRVNIGVELASDPQLLFLDEPTSGLDSSAALKVMNLIKKIASSGRSIICTIHQPSTSIFKQFDHLLLLKRGGETVYFGPTGDKSADLLGYFENHGLICDPLKNPADFILDVTDDVIETTLDGKPHQFHPVQQYKESQLNSDLLAKIDAGVMPVGTPVPEFHGVYSSSYQTQFVELGKRSWLAQVRRVQNIRTRLMRSLFLGVVLGTLFVRMEETQENIYNRVSILFFSLMFGGMSGMSSIPIVNMERGVFYREQASGMYSIPIYLFTFIVTDLPWVFLSAIIYTVPMYFISGLRLDPNGAPFFYHSFISFTTYFNFSMLAMVFATVLPTDEIAHALGGVALSISSLFAGFMIPPASIAKGWHWFYQLDPTTYPLAIVMINEFQDLEFHCTSSESVTIPNVLTVNGTYIDVGPICPITNGNQILQRYEMKPEDKYKFLAVIFGYSVFFFICIFIALKFIRHQTK.

In terms of domain architecture, ABC transporter 1 spans Val-53–Lys-299. Gly-91–Thr-98 contacts ATP. The ABC transmembrane type-2 1 domain maps to Ile-388–Val-665. 7 consecutive transmembrane segments (helical) span residues Ile-398–Asn-418, Leu-428–Phe-448, Ile-477–Leu-497, Phe-504–Met-524, Leu-534–Ala-554, Ile-559–Leu-579, and Ile-642–Leu-662. Residues Arg-670–Lys-691 form a disordered region. Residues Lys-678–Lys-689 are compositionally biased toward basic residues. Residues Val-721–Gly-960 enclose the ABC transporter 2 domain. An ATP-binding site is contributed by Gly-755 to Ser-762. Residues Val-1049–Gln-1286 enclose the ABC transmembrane type-2 2 domain. Transmembrane regions (helical) follow at residues Leu-1059 to Met-1076, Val-1087 to Ile-1107, Ile-1128 to Tyr-1148, Phe-1172 to Leu-1192, Ile-1197 to Ile-1217, and Ala-1303 to Ile-1323.

This sequence belongs to the ABC transporter superfamily. ABCG family. PDR (TC 3.A.1.205) subfamily.

The protein resides in the endosome membrane. Its function is as follows. Required for endocytosis and endosomal pH regulation. The protein is ABC transporter G family member 2 (abcG2) of Dictyostelium discoideum (Social amoeba).